A 354-amino-acid polypeptide reads, in one-letter code: Serine/threonine-protein kinase-transforming protein mos (354 aa).

The region spanning 74 to 350 (VCLMHRLGSG…LLQRDLKAFR (277 aa)) is the Protein kinase domain. ATP contacts are provided by residues 80-88 (LGSGGFGSV) and K101. D209 functions as the Proton acceptor in the catalytic mechanism.

It belongs to the protein kinase superfamily. Ser/Thr protein kinase family.

It catalyses the reaction L-seryl-[protein] + ATP = O-phospho-L-seryl-[protein] + ADP + H(+). The catalysed reaction is L-threonyl-[protein] + ATP = O-phospho-L-threonyl-[protein] + ADP + H(+). The chain is Serine/threonine-protein kinase-transforming protein mos (V-MOS) from Moloney murine sarcoma virus (strain ts110) (MoMSV).